Consider the following 129-residue polypeptide: Small ribosomal subunit protein uS11c (129 aa).

Belongs to the universal ribosomal protein uS11 family. In terms of assembly, part of the 30S ribosomal subunit.

Its subcellular location is the plastid. It localises to the chloroplast. The sequence is that of Small ribosomal subunit protein uS11c from Euglena gracilis.